The chain runs to 458 residues: Glutamyl-tRNA reductase (458 aa).

Residues 49–52 (TCNR), S109, 114–116 (EQQ), and Q120 each bind substrate. The active-site Nucleophile is C50. NADP(+) is bound at residue 191–196 (GAGAMA).

Belongs to the glutamyl-tRNA reductase family. In terms of assembly, homodimer.

It catalyses the reaction (S)-4-amino-5-oxopentanoate + tRNA(Glu) + NADP(+) = L-glutamyl-tRNA(Glu) + NADPH + H(+). It participates in porphyrin-containing compound metabolism; protoporphyrin-IX biosynthesis; 5-aminolevulinate from L-glutamyl-tRNA(Glu): step 1/2. Functionally, catalyzes the NADPH-dependent reduction of glutamyl-tRNA(Glu) to glutamate 1-semialdehyde (GSA). This is Glutamyl-tRNA reductase from Corynebacterium aurimucosum (strain ATCC 700975 / DSM 44827 / CIP 107346 / CN-1) (Corynebacterium nigricans).